Reading from the N-terminus, the 401-residue chain is Voltage-gated potassium channel subunit beta-3 (401 aa).

Polar residues-rich tracts occupy residues 1 to 14 and 32 to 41; these read MQVSFACTEQTLRS and GVSMAQTKQR. Residues 1-49 are disordered; that stretch reads MQVSFACTEQTLRSRTSEDRLCPSRPSGGQNGVSMAQTKQRTPPMGAKN. Residues T90, W91, Q97, and D119 each contribute to the NADP(+) site. The active-site Proton donor/acceptor is Y124. Positions 192, 222, 223, 248, 277, 278, 279, 280, 281, 282, 288, 298, 357, 359, 363, 366, and 367 each coordinate NADP(+).

It belongs to the shaker potassium channel beta subunit family. As to quaternary structure, forms heteromultimeric complex with alpha subunits. Identified in potassium channel complexes containing KCNA1 and KCNA2.

It is found in the cytoplasm. In terms of biological role, regulatory subunit of the voltage-gated potassium (Kv) channels composed of pore-forming and potassium-conducting alpha subunits and of regulatory beta subunit. The beta-3/KCNAB3 subunit may mediate closure of potassium channels. Increases and accelerates inactivation of Kv1.1/KCNA1 and Kv2.2/KCNA2 subunit-containing channels. May display nicotinamide adenine dinucleotide phosphate (NADPH)-dependent aldoketoreductase activity. The binding of oxidized and reduced NADP(H) cofactors may be required for the regulation of potassium channel activity. The sequence is that of Voltage-gated potassium channel subunit beta-3 (kcnab3) from Xenopus laevis (African clawed frog).